The primary structure comprises 456 residues: Crinkler effector protein 2 (456 aa).

The N-terminal stretch at 1 to 17 is a signal peptide; that stretch reads MVKLVCAIVGVAGSAFP. An LQLFLAK domain region spans residues 18 to 54; it reads VDTDASQLVGDLKKAIKAENAMTFTGDAKDLQLFLAK. A DWL domain region spans residues 55 to 136; the sequence is QPVDDESGKE…NMELPSSEQI (82 aa). The HVLVXXP motif motif lies at 137-143; that stretch reads HVLVVVP. N-linked (GlcNAc...) asparagine glycosylation occurs at Asn-338.

The protein belongs to the Crinkler effector family.

The protein localises to the secreted. It localises to the host nucleus. In terms of biological role, secreted effector that effector that induces cell death when expressed in host plants. Induces the expression of defense response genes in tomato. The protein is Crinkler effector protein 2 of Phytophthora infestans (Potato late blight agent).